A 415-amino-acid chain; its full sequence is Multifunctional CCA protein (415 aa).

ATP contacts are provided by glycine 8 and arginine 11. CTP is bound by residues glycine 8 and arginine 11. 2 residues coordinate Mg(2+): aspartate 21 and aspartate 23. Positions 91, 143, and 146 each coordinate ATP. Positions 91, 143, and 146 each coordinate CTP. The 102-residue stretch at 232–333 (TGVHVMMVID…TRLLERCDAL (102 aa)) folds into the HD domain.

It belongs to the tRNA nucleotidyltransferase/poly(A) polymerase family. Bacterial CCA-adding enzyme type 1 subfamily. In terms of assembly, monomer. Can also form homodimers and oligomers. Mg(2+) is required as a cofactor. It depends on Ni(2+) as a cofactor.

It catalyses the reaction a tRNA precursor + 2 CTP + ATP = a tRNA with a 3' CCA end + 3 diphosphate. The catalysed reaction is a tRNA with a 3' CCA end + 2 CTP + ATP = a tRNA with a 3' CCACCA end + 3 diphosphate. Catalyzes the addition and repair of the essential 3'-terminal CCA sequence in tRNAs without using a nucleic acid template. Adds these three nucleotides in the order of C, C, and A to the tRNA nucleotide-73, using CTP and ATP as substrates and producing inorganic pyrophosphate. tRNA 3'-terminal CCA addition is required both for tRNA processing and repair. Also involved in tRNA surveillance by mediating tandem CCA addition to generate a CCACCA at the 3' terminus of unstable tRNAs. While stable tRNAs receive only 3'-terminal CCA, unstable tRNAs are marked with CCACCA and rapidly degraded. In Cupriavidus pinatubonensis (strain JMP 134 / LMG 1197) (Cupriavidus necator (strain JMP 134)), this protein is Multifunctional CCA protein.